The chain runs to 61 residues: Large ribosomal subunit protein uL29 (61 aa).

The protein belongs to the universal ribosomal protein uL29 family.

This is Large ribosomal subunit protein uL29 from Stenotrophomonas maltophilia (strain R551-3).